A 229-amino-acid polypeptide reads, in one-letter code: Enolase-phosphatase E1 (229 aa).

The protein belongs to the HAD-like hydrolase superfamily. MasA/MtnC family. Monomer. Mg(2+) serves as cofactor.

It carries out the reaction 5-methylsulfanyl-2,3-dioxopentyl phosphate + H2O = 1,2-dihydroxy-5-(methylsulfanyl)pent-1-en-3-one + phosphate. The protein operates within amino-acid biosynthesis; L-methionine biosynthesis via salvage pathway; L-methionine from S-methyl-5-thio-alpha-D-ribose 1-phosphate: step 3/6. It participates in amino-acid biosynthesis; L-methionine biosynthesis via salvage pathway; L-methionine from S-methyl-5-thio-alpha-D-ribose 1-phosphate: step 4/6. In terms of biological role, bifunctional enzyme that catalyzes the enolization of 2,3-diketo-5-methylthiopentyl-1-phosphate (DK-MTP-1-P) into the intermediate 2-hydroxy-3-keto-5-methylthiopentenyl-1-phosphate (HK-MTPenyl-1-P), which is then dephosphorylated to form the acireductone 1,2-dihydroxy-3-keto-5-methylthiopentene (DHK-MTPene). This is Enolase-phosphatase E1 from Yersinia pseudotuberculosis serotype IB (strain PB1/+).